Reading from the N-terminus, the 290-residue chain is uncharacterized protein (290 aa).

Helical transmembrane passes span 40 to 60 (MHVILLSALFYQIINILSPVI), 80 to 100 (DAHVVSSVQSIVLICLGYTCL), 110 to 130 (LFGYSVVAGDIYALTAGYFVW), 139 to 159 (VHITGIGFVIHAIAALFVITF), 166 to 188 (MYYGPTYLSWELSTPFLNIHYFL), 200 to 220 (MINGFILIVTFICVRIAWGWF), and 238 to 260 (WALSLFYLAANMSLNCLNLFWVS). The TLC domain occupies 74–271 (KTRLNWDAHV…MIDAIRRRAH (198 aa)).

Its subcellular location is the endoplasmic reticulum membrane. This is an uncharacterized protein from Schizosaccharomyces pombe (strain 972 / ATCC 24843) (Fission yeast).